The sequence spans 480 residues: UDP-N-acetylmuramoylalanine--D-glutamate ligase (480 aa).

127 to 133 (GTNGKTT) lines the ATP pocket.

It belongs to the MurCDEF family.

The protein localises to the cytoplasm. It carries out the reaction UDP-N-acetyl-alpha-D-muramoyl-L-alanine + D-glutamate + ATP = UDP-N-acetyl-alpha-D-muramoyl-L-alanyl-D-glutamate + ADP + phosphate + H(+). It participates in cell wall biogenesis; peptidoglycan biosynthesis. Cell wall formation. Catalyzes the addition of glutamate to the nucleotide precursor UDP-N-acetylmuramoyl-L-alanine (UMA). The polypeptide is UDP-N-acetylmuramoylalanine--D-glutamate ligase (Tropheryma whipplei (strain TW08/27) (Whipple's bacillus)).